The sequence spans 371 residues: Flagellar P-ring protein (371 aa).

The signal sequence occupies residues 1–28; the sequence is MPARPTPPAVPLALALAAALAAPAPAAA.

Belongs to the FlgI family. The basal body constitutes a major portion of the flagellar organelle and consists of four rings (L,P,S, and M) mounted on a central rod.

It is found in the periplasm. The protein resides in the bacterial flagellum basal body. Assembles around the rod to form the L-ring and probably protects the motor/basal body from shearing forces during rotation. The sequence is that of Flagellar P-ring protein from Anaeromyxobacter dehalogenans (strain 2CP-C).